Reading from the N-terminus, the 391-residue chain is NADH-quinone oxidoreductase subunit D (391 aa).

It belongs to the complex I 49 kDa subunit family. As to quaternary structure, NDH-1 is composed of 14 different subunits. Subunits NuoB, C, D, E, F, and G constitute the peripheral sector of the complex.

The protein localises to the cell inner membrane. It catalyses the reaction a quinone + NADH + 5 H(+)(in) = a quinol + NAD(+) + 4 H(+)(out). Its function is as follows. NDH-1 shuttles electrons from NADH, via FMN and iron-sulfur (Fe-S) centers, to quinones in the respiratory chain. The immediate electron acceptor for the enzyme in this species is believed to be ubiquinone. Couples the redox reaction to proton translocation (for every two electrons transferred, four hydrogen ions are translocated across the cytoplasmic membrane), and thus conserves the redox energy in a proton gradient. This is NADH-quinone oxidoreductase subunit D from Rickettsia bellii (strain OSU 85-389).